The chain runs to 382 residues: Chorismate synthase (382 aa).

Positions 39 and 45 each coordinate NADP(+). Residues 127-129 (RAS), 245-246 (QA), glycine 290, 305-309 (KPIPT), and arginine 331 contribute to the FMN site.

Belongs to the chorismate synthase family. Homotetramer. The cofactor is FMNH2.

The enzyme catalyses 5-O-(1-carboxyvinyl)-3-phosphoshikimate = chorismate + phosphate. It participates in metabolic intermediate biosynthesis; chorismate biosynthesis; chorismate from D-erythrose 4-phosphate and phosphoenolpyruvate: step 7/7. In terms of biological role, catalyzes the anti-1,4-elimination of the C-3 phosphate and the C-6 proR hydrogen from 5-enolpyruvylshikimate-3-phosphate (EPSP) to yield chorismate, which is the branch point compound that serves as the starting substrate for the three terminal pathways of aromatic amino acid biosynthesis. This reaction introduces a second double bond into the aromatic ring system. This is Chorismate synthase from Desulfitobacterium hafniense (strain DSM 10664 / DCB-2).